The primary structure comprises 189 residues: Interferon alpha-H (189 aa).

The first 23 residues, 1-23 (MAPAWSFLLALLLLSCNAICSLG), serve as a signal peptide directing secretion. 2 cysteine pairs are disulfide-bonded: C24–C122 and C52–C162.

This sequence belongs to the alpha/beta interferon family.

It localises to the secreted. In terms of biological role, produced by macrophages, IFN-alpha have antiviral activities. Interferon stimulates the production of two enzymes: a protein kinase and an oligoadenylate synthetase. The chain is Interferon alpha-H (IFNAH) from Bos taurus (Bovine).